Reading from the N-terminus, the 192-residue chain is Cytochrome b-245 light chain (192 aa).

The Cytoplasmic segment spans residues 2–7 (GQIEWA). The helical transmembrane segment at 8–30 (MWANEQALASGLILMTGGIVATA) threads the bilayer. At 31–35 (GQFTQ) the chain is on the extracellular side. A helical membrane pass occupies residues 36 to 53 (WYLGTYSIAAGVLVCLLE). Residues 54–69 (YPRGRRTKGSTMERCE) lie on the Cytoplasmic side of the membrane. Residues 70–80 (QKYMTKVVKAF) lie within the membrane without spanning it. Over 81–86 (GPLSRN) the chain is Cytoplasmic. The chain crosses the membrane as a helical span at residues 87–104 (YYIRAFLHLGLSVPAGFL). Leu-105 is a topological domain (extracellular). Residues 106-126 (ATILGTACLAIASGIYLLAAI) traverse the membrane as a helical segment. Topologically, residues 127-192 (RGEQWTPIEP…TPCPVTDEVV (66 aa)) are cytoplasmic. The tract at residues 134–192 (IEPKPKERPQVGGTIKQPPSNPPPRPPPEARKKPGEEAVAGVPRGAPRKTPCPVTDEVV) is disordered. At Thr-147 the chain carries Phosphothreonine. A Glycyl lysine isopeptide (Lys-Gly) (interchain with G-Cter in ubiquitin) cross-link involves residue Lys-149.

Belongs to the p22phox family. In terms of assembly, component of the phagocyte NADPH oxidase core complex/cytochrome b558 complex, composed of CYBB (heavy chain (beta)) and CYBA (light chain (alpha)). Component of the phagocyte NADPH oxidase complex composed of an obligatory core heterodimer formed by the membrane proteins CYBA and CYBB and the cytosolic regulatory subunits NCF1/p47-phox, NCF2/p67-phox, NCF4/p40-phox and the small GTPase RAC1 or RAC2. Interacts with NCF1 (via SH3 domain). Interacts with SH3PXD2A. Interacts with DUOX1, DUOX2 and TPO. Interacts with NOX4; this interaction mediates superoxide generation. Interacts with calprotectin (S100A8/9). Interacts with GBP7. Interacts with NOXO1. Forms a heterodimer with NOX3 and is essential for activity and cell membrane localization of NOX3. Interacts with NOX1. Post-translationally, phosphorylation at Thr-147 enhances NADPH oxidase activity by promoting NCF1/p47-phox binding. Ubiquitinated at Lys-149 likely by RNF145.

The protein localises to the cell membrane. Functionally, subunit of NADPH oxidase complexes that is required for the NADPH oxidase activity that generates, in various cell types, superoxide from molecular oxygen utilizing NADPH as an electron donor. Subunit of the phagocyte NADPH oxidase complex that mediates the transfer of electrons from cytosolic NADPH to O2 to produce the superoxide anion (O2(-)). In the activated complex, electrons are first transferred from NADPH to flavin adenine dinucleotide (FAD) and subsequently transferred via two heme molecules to molecular oxygen, producing superoxide through an outer-sphere reaction. Activation of the NADPH oxidase complex is initiated by the assembly of cytosolic subunits of the NADPH oxidase complex with the core NADPH oxidase complex to form a complex at the plasma membrane or phagosomal membrane. This activation process is initiated by phosphorylation dependent binding of the cytosolic NCF1/p47-phox subunit to the C-terminus of CYBA/p22-phox. Aassociates with NOX3 to form a functional NADPH oxidase constitutively generating superoxide. The protein is Cytochrome b-245 light chain of Sus scrofa (Pig).